The primary structure comprises 357 residues: DnaJ homolog subfamily C member 25 (357 aa).

Residues 19–39 traverse the membrane as a helical segment; it reads WLLLAPLLLVPLLARPAEALV. Residues 48–121 form the J domain; it reads DCYEVLGVSR…ETRKDYDYML (74 aa). The next 2 helical transmembrane spans lie at 147 to 167 and 241 to 261; these read VVILVSVCAISMFQYFSWWNS and LLLFQVILAPVHLCSYIAWYC.

The protein belongs to the DNAJC25 family.

It localises to the membrane. This Mus musculus (Mouse) protein is DnaJ homolog subfamily C member 25 (Dnajc25).